Reading from the N-terminus, the 578-residue chain is Proline--tRNA ligase (578 aa).

Belongs to the class-II aminoacyl-tRNA synthetase family. ProS type 1 subfamily. Homodimer.

The protein localises to the cytoplasm. The catalysed reaction is tRNA(Pro) + L-proline + ATP = L-prolyl-tRNA(Pro) + AMP + diphosphate. Catalyzes the attachment of proline to tRNA(Pro) in a two-step reaction: proline is first activated by ATP to form Pro-AMP and then transferred to the acceptor end of tRNA(Pro). As ProRS can inadvertently accommodate and process non-cognate amino acids such as alanine and cysteine, to avoid such errors it has two additional distinct editing activities against alanine. One activity is designated as 'pretransfer' editing and involves the tRNA(Pro)-independent hydrolysis of activated Ala-AMP. The other activity is designated 'posttransfer' editing and involves deacylation of mischarged Ala-tRNA(Pro). The misacylated Cys-tRNA(Pro) is not edited by ProRS. In Burkholderia lata (strain ATCC 17760 / DSM 23089 / LMG 22485 / NCIMB 9086 / R18194 / 383), this protein is Proline--tRNA ligase.